We begin with the raw amino-acid sequence, 593 residues long: NADH-quinone oxidoreductase subunit C/D (593 aa).

The NADH dehydrogenase I subunit C stretch occupies residues 1–184; it reads MTADNAIFIP…DPYSLTLAKQ (184 aa). Residues 208–593 are NADH dehydrogenase I subunit D; the sequence is DYMFLNLGPN…IDFVMADVDR (386 aa).

It in the N-terminal section; belongs to the complex I 30 kDa subunit family. This sequence in the C-terminal section; belongs to the complex I 49 kDa subunit family. As to quaternary structure, NDH-1 is composed of 13 different subunits. Subunits NuoB, CD, E, F, and G constitute the peripheral sector of the complex.

The protein localises to the cell inner membrane. The catalysed reaction is a quinone + NADH + 5 H(+)(in) = a quinol + NAD(+) + 4 H(+)(out). Functionally, NDH-1 shuttles electrons from NADH, via FMN and iron-sulfur (Fe-S) centers, to quinones in the respiratory chain. The immediate electron acceptor for the enzyme in this species is believed to be ubiquinone. Couples the redox reaction to proton translocation (for every two electrons transferred, four hydrogen ions are translocated across the cytoplasmic membrane), and thus conserves the redox energy in a proton gradient. This is NADH-quinone oxidoreductase subunit C/D from Pseudomonas putida (strain W619).